The chain runs to 293 residues: Heterogeneous nuclear ribonucleoprotein D-like-A (293 aa).

Residues 1–21 are disordered; the sequence is MAGFGAAPDFNEGSKINASKN. 2 RRM domains span residues 26-108 and 111-188; these read GKMF…KGKE and KKVF…AAQP. Disordered stretches follow at residues 193-224 and 274-293; these read RQQQQKQQRGGRGAVTGRGGTRGRGRGQGWNQ and QSTYGKARGGGNHQNNYQPY. Over residues 202–222 the composition is skewed to gly residues; sequence GGRGAVTGRGGTRGRGRGQGW.

It is found in the nucleus. The protein localises to the cytoplasm. Acts as a transcriptional regulator. Binds DNA and RNA. The chain is Heterogeneous nuclear ribonucleoprotein D-like-A (hnrnpdl-a) from Xenopus laevis (African clawed frog).